A 343-amino-acid chain; its full sequence is uncharacterized protein (343 aa).

This is an uncharacterized protein from Nostoc sp. (strain PCC 7120 / SAG 25.82 / UTEX 2576).